Consider the following 505-residue polypeptide: tRNA-2-methylthio-N(6)-dimethylallyladenosine synthase (505 aa).

The MTTase N-terminal domain occupies 10–126 (RSYEVRTYGC…LPALLDRARH (117 aa)). Residues C19, C55, C89, C163, C167, and C170 each contribute to the [4Fe-4S] cluster site. The Radical SAM core domain occupies 149–385 (RESAYAGWVS…IALQEQITLE (237 aa)). Residues 388–459 (QKLVGAEVEL…PHHLVADTPV (72 aa)) form the TRAM domain.

Belongs to the methylthiotransferase family. MiaB subfamily. Monomer. [4Fe-4S] cluster is required as a cofactor.

The protein resides in the cytoplasm. It catalyses the reaction N(6)-dimethylallyladenosine(37) in tRNA + (sulfur carrier)-SH + AH2 + 2 S-adenosyl-L-methionine = 2-methylsulfanyl-N(6)-dimethylallyladenosine(37) in tRNA + (sulfur carrier)-H + 5'-deoxyadenosine + L-methionine + A + S-adenosyl-L-homocysteine + 2 H(+). In terms of biological role, catalyzes the methylthiolation of N6-(dimethylallyl)adenosine (i(6)A), leading to the formation of 2-methylthio-N6-(dimethylallyl)adenosine (ms(2)i(6)A) at position 37 in tRNAs that read codons beginning with uridine. This is tRNA-2-methylthio-N(6)-dimethylallyladenosine synthase from Rhodococcus jostii (strain RHA1).